We begin with the raw amino-acid sequence, 415 residues long: Serine hydroxymethyltransferase 1 (415 aa).

(6S)-5,6,7,8-tetrahydrofolate is bound by residues L122 and 126–128 (GHL). K230 carries the N6-(pyridoxal phosphate)lysine modification.

This sequence belongs to the SHMT family. Homodimer. Requires pyridoxal 5'-phosphate as cofactor.

The protein resides in the cytoplasm. The enzyme catalyses (6R)-5,10-methylene-5,6,7,8-tetrahydrofolate + glycine + H2O = (6S)-5,6,7,8-tetrahydrofolate + L-serine. It participates in one-carbon metabolism; tetrahydrofolate interconversion. The protein operates within amino-acid biosynthesis; glycine biosynthesis; glycine from L-serine: step 1/1. In terms of biological role, catalyzes the reversible interconversion of serine and glycine with tetrahydrofolate (THF) serving as the one-carbon carrier. This reaction serves as the major source of one-carbon groups required for the biosynthesis of purines, thymidylate, methionine, and other important biomolecules. Also exhibits THF-independent aldolase activity toward beta-hydroxyamino acids, producing glycine and aldehydes, via a retro-aldol mechanism. This chain is Serine hydroxymethyltransferase 1, found in Ralstonia nicotianae (strain ATCC BAA-1114 / GMI1000) (Ralstonia solanacearum).